The chain runs to 489 residues: Alpha-amylase (489 aa).

The signal sequence occupies residues 1–16 (HFKPILVLCLATLALG). A disulfide bridge connects residues C44 and C102. Residues N116, R164, and D173 each coordinate Ca(2+). The cysteines at positions 152 and 166 are disulfide-linked. Residue R201 coordinates chloride. D203 functions as the Nucleophile in the catalytic mechanism. Ca(2+) is bound at residue H207. Catalysis depends on E240, which acts as the Proton donor. Positions 303 and 339 each coordinate chloride. 2 disulfide bridges follow: C372/C378 and C443/C455.

Belongs to the glycosyl hydrolase 13 family. In terms of assembly, monomer. Requires Ca(2+) as cofactor. Chloride serves as cofactor.

It catalyses the reaction Endohydrolysis of (1-&gt;4)-alpha-D-glucosidic linkages in polysaccharides containing three or more (1-&gt;4)-alpha-linked D-glucose units.. The protein is Alpha-amylase of Tribolium castaneum (Red flour beetle).